The chain runs to 475 residues: Adenosylhomocysteinase (475 aa).

Thr61, Asp140, and Glu200 together coordinate substrate. Residue Thr201–Thr203 coordinates NAD(+). Residues Lys230 and Asp234 each coordinate substrate. NAD(+) contacts are provided by residues Asn235, Gly264–Gly269, Glu287, Asn322, Ile343–His345, and Asn388.

The protein belongs to the adenosylhomocysteinase family. NAD(+) is required as a cofactor.

The protein resides in the cytoplasm. It catalyses the reaction S-adenosyl-L-homocysteine + H2O = L-homocysteine + adenosine. Its pathway is amino-acid biosynthesis; L-homocysteine biosynthesis; L-homocysteine from S-adenosyl-L-homocysteine: step 1/1. May play a key role in the regulation of the intracellular concentration of adenosylhomocysteine. The chain is Adenosylhomocysteinase from Paracidovorax citrulli (strain AAC00-1) (Acidovorax citrulli).